A 385-amino-acid polypeptide reads, in one-letter code: Acetate kinase (385 aa).

Asn-9 contacts Mg(2+). Lys-16 contacts ATP. A substrate-binding site is contributed by Arg-87. Catalysis depends on Asp-144, which acts as the Proton donor/acceptor. ATP contacts are provided by residues 202-206 (HLGSG) and 277-279 (DMR). Glu-373 is a Mg(2+) binding site.

The protein belongs to the acetokinase family. Homodimer. Mg(2+) is required as a cofactor. It depends on Mn(2+) as a cofactor.

The protein resides in the cytoplasm. The catalysed reaction is acetate + ATP = acetyl phosphate + ADP. It participates in metabolic intermediate biosynthesis; acetyl-CoA biosynthesis; acetyl-CoA from acetate: step 1/2. Catalyzes the formation of acetyl phosphate from acetate and ATP. Can also catalyze the reverse reaction. The polypeptide is Acetate kinase (Rickettsia felis (strain ATCC VR-1525 / URRWXCal2) (Rickettsia azadi)).